Reading from the N-terminus, the 363-residue chain is S-adenosylmethionine:tRNA ribosyltransferase-isomerase (363 aa).

The protein belongs to the QueA family. In terms of assembly, monomer.

The protein resides in the cytoplasm. It catalyses the reaction 7-aminomethyl-7-carbaguanosine(34) in tRNA + S-adenosyl-L-methionine = epoxyqueuosine(34) in tRNA + adenine + L-methionine + 2 H(+). It participates in tRNA modification; tRNA-queuosine biosynthesis. Transfers and isomerizes the ribose moiety from AdoMet to the 7-aminomethyl group of 7-deazaguanine (preQ1-tRNA) to give epoxyqueuosine (oQ-tRNA). The polypeptide is S-adenosylmethionine:tRNA ribosyltransferase-isomerase (Magnetococcus marinus (strain ATCC BAA-1437 / JCM 17883 / MC-1)).